The sequence spans 474 residues: 6-phospho-beta-galactosidase (474 aa).

Glutamine 19, histidine 116, asparagine 159, glutamate 160, and asparagine 297 together coordinate D-galactose 6-phosphate. The Proton donor role is filled by glutamate 160. Residue glutamate 375 is the Nucleophile of the active site. Residues serine 433, tryptophan 434, lysine 440, and tyrosine 442 each contribute to the D-galactose 6-phosphate site.

Belongs to the glycosyl hydrolase 1 family.

It catalyses the reaction a 6-phospho-beta-D-galactoside + H2O = D-galactose 6-phosphate + an alcohol. The protein operates within carbohydrate metabolism; lactose degradation; D-galactose 6-phosphate and beta-D-glucose from lactose 6-phosphate: step 1/1. The polypeptide is 6-phospho-beta-galactosidase (Lacticaseibacillus rhamnosus (Lactobacillus rhamnosus)).